Consider the following 343-residue polypeptide: NADH-quinone oxidoreductase subunit H (343 aa).

8 consecutive transmembrane segments (helical) span residues 21–41 (WTLV…LFCV), 95–115 (FILA…VVPF), 124–144 (VNVG…GVLL), 172–192 (MGFT…GDIV), 197–217 (GLWY…SVVA), 257–277 (IIMV…PPIE), 281–301 (FIPG…FFLW), and 317–337 (LGWK…GLAM).

It belongs to the complex I subunit 1 family. As to quaternary structure, NDH-1 is composed of 14 different subunits. Subunits NuoA, H, J, K, L, M, N constitute the membrane sector of the complex.

The protein resides in the cell inner membrane. It catalyses the reaction a quinone + NADH + 5 H(+)(in) = a quinol + NAD(+) + 4 H(+)(out). Functionally, NDH-1 shuttles electrons from NADH, via FMN and iron-sulfur (Fe-S) centers, to quinones in the respiratory chain. The immediate electron acceptor for the enzyme in this species is believed to be ubiquinone. Couples the redox reaction to proton translocation (for every two electrons transferred, four hydrogen ions are translocated across the cytoplasmic membrane), and thus conserves the redox energy in a proton gradient. This subunit may bind ubiquinone. In Magnetococcus marinus (strain ATCC BAA-1437 / JCM 17883 / MC-1), this protein is NADH-quinone oxidoreductase subunit H.